A 140-amino-acid chain; its full sequence is Nucleoside diphosphate kinase (140 aa).

The ATP site is built by Lys-11, Phe-59, Arg-87, Thr-93, Arg-104, and Asn-114. His-117 serves as the catalytic Pros-phosphohistidine intermediate.

Belongs to the NDK family. Homotetramer. Mg(2+) serves as cofactor.

Its subcellular location is the cytoplasm. It catalyses the reaction a 2'-deoxyribonucleoside 5'-diphosphate + ATP = a 2'-deoxyribonucleoside 5'-triphosphate + ADP. The enzyme catalyses a ribonucleoside 5'-diphosphate + ATP = a ribonucleoside 5'-triphosphate + ADP. In terms of biological role, major role in the synthesis of nucleoside triphosphates other than ATP. The ATP gamma phosphate is transferred to the NDP beta phosphate via a ping-pong mechanism, using a phosphorylated active-site intermediate. The polypeptide is Nucleoside diphosphate kinase (Brucella canis (strain ATCC 23365 / NCTC 10854 / RM-666)).